The following is an 89-amino-acid chain: Small ribosomal subunit protein uS14 (89 aa).

The protein belongs to the universal ribosomal protein uS14 family. In terms of assembly, part of the 30S ribosomal subunit. Contacts proteins S3 and S10.

Binds 16S rRNA, required for the assembly of 30S particles and may also be responsible for determining the conformation of the 16S rRNA at the A site. The sequence is that of Small ribosomal subunit protein uS14 from Akkermansia muciniphila (strain ATCC BAA-835 / DSM 22959 / JCM 33894 / BCRC 81048 / CCUG 64013 / CIP 107961 / Muc).